The following is a 698-amino-acid chain: Polyribonucleotide nucleotidyltransferase (698 aa).

Residues D490 and D496 each coordinate Mg(2+). One can recognise a KH domain in the interval 557 to 616 (PKVVTMTIKPDKIRDVIGPGGKKINEIIDETGVKLDIEQDGTIFIGAVDQAMINRAREII). Residues 626–694 (GQTYQATVKR…KQGRVNASHR (69 aa)) enclose the S1 motif domain.

This sequence belongs to the polyribonucleotide nucleotidyltransferase family. Mg(2+) is required as a cofactor.

The protein resides in the cytoplasm. The enzyme catalyses RNA(n+1) + phosphate = RNA(n) + a ribonucleoside 5'-diphosphate. In terms of biological role, involved in mRNA degradation. Catalyzes the phosphorolysis of single-stranded polyribonucleotides processively in the 3'- to 5'-direction. The protein is Polyribonucleotide nucleotidyltransferase of Staphylococcus aureus (strain MSSA476).